The primary structure comprises 1388 residues: Retrotransposon Gag-like protein 9 (1388 aa).

5 disordered regions span residues 491–511 (ATAS…GAMS), 769–790 (TPLM…ASSS), 895–918 (GGVS…RRPS), 1100–1138 (TDSG…PKEV), and 1336–1388 (AMGN…HTNK). Residues 1103–1123 (GEASTSHINITASGSKPTSHM) show a composition bias toward polar residues. The span at 1359 to 1374 (YLKEHGDPQEGLHDHL) shows a compositional bias: basic and acidic residues.

The chain is Retrotransposon Gag-like protein 9 from Homo sapiens (Human).